The primary structure comprises 427 residues: Enolase 1 (427 aa).

Q162 serves as a coordination point for (2R)-2-phosphoglycerate. Residue E204 is the Proton donor of the active site. Residues D241, E285, and D312 each coordinate Mg(2+). (2R)-2-phosphoglycerate contacts are provided by K337, R366, S367, and K388. K337 acts as the Proton acceptor in catalysis.

The protein belongs to the enolase family. Mg(2+) serves as cofactor.

The protein resides in the cytoplasm. Its subcellular location is the secreted. The protein localises to the cell surface. It carries out the reaction (2R)-2-phosphoglycerate = phosphoenolpyruvate + H2O. It functions in the pathway carbohydrate degradation; glycolysis; pyruvate from D-glyceraldehyde 3-phosphate: step 4/5. Functionally, catalyzes the reversible conversion of 2-phosphoglycerate (2-PG) into phosphoenolpyruvate (PEP). It is essential for the degradation of carbohydrates via glycolysis. This chain is Enolase 1, found in Chlorobaculum tepidum (strain ATCC 49652 / DSM 12025 / NBRC 103806 / TLS) (Chlorobium tepidum).